The chain runs to 69 residues: MTIARGDFVRIKRKESYWYNDTGKVASIDKSGIKYNVTVKFDRVNFYGISGTDGGNVTNNFAEVELEKI.

It belongs to the PsaE family.

The protein resides in the cellular thylakoid membrane. Functionally, stabilizes the interaction between PsaC and the PSI core, assists the docking of the ferredoxin to PSI and interacts with ferredoxin-NADP oxidoreductase. The sequence is that of Photosystem I reaction center subunit IV from Prochlorococcus marinus (strain MIT 9515).